Consider the following 459-residue polypeptide: Cysteine--tRNA ligase (459 aa).

Residue Cys-31 participates in Zn(2+) binding. Positions 33–43 match the 'HIGH' region motif; sequence PTVYDNPHIGN. Zn(2+)-binding residues include Cys-216, His-241, and Glu-245. The short motif at 274-278 is the 'KMSKS' region element; the sequence is KMSKS. Lys-277 contacts ATP.

It belongs to the class-I aminoacyl-tRNA synthetase family. Monomer. The cofactor is Zn(2+).

It localises to the cytoplasm. The catalysed reaction is tRNA(Cys) + L-cysteine + ATP = L-cysteinyl-tRNA(Cys) + AMP + diphosphate. This chain is Cysteine--tRNA ligase, found in Rickettsia massiliae (strain Mtu5).